Consider the following 202-residue polypeptide: Peptide methionine sulfoxide reductase A1 (202 aa).

The tract at residues Met-1–Ser-20 is disordered. Ser-189 is modified (phosphoserine).

This sequence belongs to the MsrA Met sulfoxide reductase family.

The protein localises to the cytoplasm. Its subcellular location is the cytosol. The catalysed reaction is L-methionyl-[protein] + [thioredoxin]-disulfide + H2O = L-methionyl-(S)-S-oxide-[protein] + [thioredoxin]-dithiol. It catalyses the reaction [thioredoxin]-disulfide + L-methionine + H2O = L-methionine (S)-S-oxide + [thioredoxin]-dithiol. Functionally, catalyzes the reduction of methionine sulfoxide (MetSO) to methionine in proteins. Plays a protective role against oxidative stress by restoring activity to proteins that have been inactivated by methionine oxidation. MSRA family specifically reduces the MetSO S-enantiomer. The protein is Peptide methionine sulfoxide reductase A1 (MSRA1) of Arabidopsis thaliana (Mouse-ear cress).